Consider the following 410-residue polypeptide: FAS1 domain-containing protein CaO19.3004 (410 aa).

The first 18 residues, 1–18 (MKLSKLLQLAVFSSLVTS), serve as a signal peptide directing secretion. 2 stretches are compositionally biased toward basic and acidic residues: residues 64–73 (NAKFKRDPKN) and 83–96 (GSAE…REPK). Residues 64-98 (NAKFKRDPKNVIDPASLKEGSAEEEQKDKREPKNL) form a disordered region. The FAS1 domain occupies 247–407 (NNLLQSILPQ…GFVLIINDSL (161 aa)).

It is found in the vacuole. The protein is FAS1 domain-containing protein CaO19.3004 of Candida albicans (strain SC5314 / ATCC MYA-2876) (Yeast).